The primary structure comprises 388 residues: Sphingosine N-acyltransferase-like protein FUM17 (388 aa).

2 consecutive transmembrane segments (helical) span residues 60 to 80 (SWAL…IHPV) and 113 to 133 (LWDL…RKFI). N-linked (GlcNAc...) asparagine glycosylation is present at asparagine 146. The TLC domain occupies 151–368 (GKQQRFMEQM…LLRNAYRLLF (218 aa)). A run of 4 helical transmembrane segments spans residues 166 to 186 (FAVM…LWIF), 204 to 224 (IKFY…VLVL), 241 to 261 (IITI…IGIS), and 339 to 359 (FITF…LYCL).

Belongs to the sphingosine N-acyltransferase family.

The protein resides in the endoplasmic reticulum membrane. It participates in mycotoxin biosynthesis. Sphingosine N-acyltransferase-like protein; part of the gene cluster that mediates the biosynthesis of fumonisins B1 (FB1), B2 (FB2), B3 (FB3), and B4 (FB4), which are carcinogenic mycotoxins. May contribute to the biosynthesis of ceramide via interaction with Cer3. Does not confer resistance to FB1. The biosynthesis starts with the FUM1-catalyzed carbon chain assembly from one molecule of acetyl-CoA, eight molecules of malonyl-CoA, and two molecules of methionine (in S-adenosyl form). The C18 polyketide chain is released from the enzyme by a nucleophilic attack of a carbanion, which is derived from R-carbon of alanine by decarboxylation, on the carbonyl carbon of polyketide acyl chain. This step is catalyzed by the pyridoxal 5'-phosphate-dependent aminoacyl transferase FUM8. The resultant 3-keto intermediate is then stereospecifically reduced to a 3-hydroxyl product by reductase FUM13. Subsequent oxidations at C-10 by the cytochrome P450 monooxygenase FUM2, C-14 and C-15 by FUM6, FUM12 or FUM15, tricarballylic esterification of the hydroxyl groups on C-14 and C-15 by acyltransferase FUM14, and C-5 hydroxylation by 2-keto-glutarate-dependent dioxygenase FUM3 furnish the biosynthesis of fumonisins. The tricarballylic moieties are most likely derived from the citric acid cycle, and their addition to the carbon backbone may involve FUM7, FUM10, FUM11 and FUM14. This chain is Sphingosine N-acyltransferase-like protein FUM17, found in Gibberella moniliformis (strain M3125 / FGSC 7600) (Maize ear and stalk rot fungus).